We begin with the raw amino-acid sequence, 494 residues long: UPF0371 protein SPT_0390 (494 aa).

It belongs to the UPF0371 family.

The protein is UPF0371 protein SPT_0390 of Streptococcus pneumoniae (strain Taiwan19F-14).